Here is a 267-residue protein sequence, read N- to C-terminus: Thymidylate synthase (267 aa).

A dUMP-binding site is contributed by Arg25. His55 contributes to the (6R)-5,10-methylene-5,6,7,8-tetrahydrofolate binding site. Residue 130–131 coordinates dUMP; the sequence is RR. Cys150 (nucleophile) is an active-site residue. DUMP is bound by residues 170–173, Asn181, and 211–213; these read RSAD and HIY. Residue Asp173 coordinates (6R)-5,10-methylene-5,6,7,8-tetrahydrofolate. Ala266 provides a ligand contact to (6R)-5,10-methylene-5,6,7,8-tetrahydrofolate.

Belongs to the thymidylate synthase family. Bacterial-type ThyA subfamily. Homodimer.

It is found in the cytoplasm. The enzyme catalyses dUMP + (6R)-5,10-methylene-5,6,7,8-tetrahydrofolate = 7,8-dihydrofolate + dTMP. Its pathway is pyrimidine metabolism; dTTP biosynthesis. Functionally, catalyzes the reductive methylation of 2'-deoxyuridine-5'-monophosphate (dUMP) to 2'-deoxythymidine-5'-monophosphate (dTMP) while utilizing 5,10-methylenetetrahydrofolate (mTHF) as the methyl donor and reductant in the reaction, yielding dihydrofolate (DHF) as a by-product. This enzymatic reaction provides an intracellular de novo source of dTMP, an essential precursor for DNA biosynthesis. The chain is Thymidylate synthase from Corynebacterium efficiens (strain DSM 44549 / YS-314 / AJ 12310 / JCM 11189 / NBRC 100395).